The primary structure comprises 405 residues: Argininosuccinate synthase (405 aa).

Residues alanine 10 to serine 18 and alanine 37 contribute to the ATP site. Tyrosine 88 and serine 93 together coordinate L-citrulline. ATP is bound at residue glycine 118. Positions 120, 124, and 125 each coordinate L-aspartate. L-citrulline is bound at residue asparagine 124. L-citrulline is bound by residues arginine 128, serine 179, serine 188, glutamate 264, and tyrosine 276.

This sequence belongs to the argininosuccinate synthase family. Type 1 subfamily. In terms of assembly, homotetramer.

It localises to the cytoplasm. It catalyses the reaction L-citrulline + L-aspartate + ATP = 2-(N(omega)-L-arginino)succinate + AMP + diphosphate + H(+). It participates in amino-acid biosynthesis; L-arginine biosynthesis; L-arginine from L-ornithine and carbamoyl phosphate: step 2/3. The chain is Argininosuccinate synthase from Pseudomonas aeruginosa (strain LESB58).